A 335-amino-acid chain; its full sequence is MKKYLLIIIGVTLVLILLWWAGIERTIKLMMRADIRFILLAILMYCISVLIWAVRWNTFLKGANINVSFVKVIEGVFIGIFLNNLTPGARTGGEAVKVIFIKKASSNGSYSKVFATVIADRILDVIPVVVFMMLAFLYALTIHARVLLIILGISAIILVIILLMTTVFSIKEKYALSALLYLARIFRKIFPSKFSMSEDKIKEKLLGEIREFKETFLRLAKRKRRLSSTMLYSFILWGADILKTYFIFLSLGGRITFLQVLLVRMASIAVAMISVIPGGIGITEVVQSALFLAVGVEKALAVSVTMLDRLISFWIPTLLGGILVLKNRKLLVSSS.

Transmembrane regions (helical) follow at residues 4–24, 34–54, 62–82, 122–142, 148–168, 231–251, 266–286, and 304–324; these read YLLI…AGIE, DIRF…IWAV, GANI…GIFL, ILDV…ALTI, LIIL…TTVF, LYSF…FLSL, ASIA…TEVV, and VTML…GILV.

The protein belongs to the UPF0104 family.

It localises to the cell membrane. The protein is UPF0104 membrane protein PH1989 of Pyrococcus horikoshii (strain ATCC 700860 / DSM 12428 / JCM 9974 / NBRC 100139 / OT-3).